A 381-amino-acid chain; its full sequence is Succinyl-diaminopimelate desuccinylase 1 (381 aa).

H70 lines the Zn(2+) pocket. D72 is a catalytic residue. Zn(2+) is bound at residue D103. E136 functions as the Proton acceptor in the catalytic mechanism. Zn(2+)-binding residues include E137, E165, and H354.

This sequence belongs to the peptidase M20A family. DapE subfamily. In terms of assembly, homodimer. The cofactor is Zn(2+). Co(2+) is required as a cofactor.

It catalyses the reaction N-succinyl-(2S,6S)-2,6-diaminopimelate + H2O = (2S,6S)-2,6-diaminopimelate + succinate. It functions in the pathway amino-acid biosynthesis; L-lysine biosynthesis via DAP pathway; LL-2,6-diaminopimelate from (S)-tetrahydrodipicolinate (succinylase route): step 3/3. In terms of biological role, catalyzes the hydrolysis of N-succinyl-L,L-diaminopimelic acid (SDAP), forming succinate and LL-2,6-diaminopimelate (DAP), an intermediate involved in the bacterial biosynthesis of lysine and meso-diaminopimelic acid, an essential component of bacterial cell walls. This chain is Succinyl-diaminopimelate desuccinylase 1, found in Ruegeria sp. (strain TM1040) (Silicibacter sp.).